We begin with the raw amino-acid sequence, 142 residues long: Large ribosomal subunit protein bL21 (142 aa).

A compositionally biased stretch (basic residues) spans 74-84 (RRRQNSKRTRG). Residues 74 to 142 (RRRQNSKRTR…KAAAKAESAE (69 aa)) form a disordered region. Over residues 107–125 (KAAEKKAPKADAAEGEAAK) the composition is skewed to basic and acidic residues. Basic residues predominate over residues 126–135 (PKKAAPKKAA).

The protein belongs to the bacterial ribosomal protein bL21 family. As to quaternary structure, part of the 50S ribosomal subunit. Contacts protein L20.

Its function is as follows. This protein binds to 23S rRNA in the presence of protein L20. This is Large ribosomal subunit protein bL21 from Brucella melitensis biotype 2 (strain ATCC 23457).